The following is a 282-amino-acid chain: Transcription factor HES-1 (282 aa).

The tract at residues 1 to 44 (MPADIMEKNSSSPVAATPASVNTTPDKPKTASEHRKSSKPIMEK) is disordered. Positions 10 to 21 (SSSPVAATPASV) are enriched in low complexity. Basic and acidic residues predominate over residues 26 to 35 (DKPKTASEHR). The bHLH domain occupies 34–91 (HRKSSKPIMEKRRRARINESLSQLKTLILDALKKDSSRHSKLEKADILEMTVKHLRNL). Positions 110–143 (YRAGFSECMNEVTRFLSTCEGVNTEVRTRLLGHL) constitute an Orange domain. Disordered stretches follow at residues 158–204 (QAHP…GSAP) and 256–282 (TSVGPNAVSPSSGSSLTSDSMWRPWRN). 2 stretches are compositionally biased toward pro residues: residues 164 to 174 (QAPPPPPPSGP) and 182 to 202 (FAPPPPPLVPIPGGAAPPPGS). Positions 264 to 275 (SPSSGSSLTSDS) are enriched in low complexity. The short motif at 277-280 (WRPW) is the WRPW motif element.

As to quaternary structure, interacts with SIRT1. Transcription repression requires formation of a complex with a corepressor protein of the Groucho/TLE family. Interacts (via WPRW motif) with TLE1, and more weakly with TLE2. Interacts with HES6. Interacts with an FA complex, composed of FANCA, FANCF, FANCG and FANCL, but not of FANCC, nor FANCE. As to expression, expressed at high levels in undifferentiated neural precursor cells, but the level of expression decreases as neural differentiation proceeds.

The protein resides in the nucleus. In terms of biological role, transcriptional repressor of genes that require a bHLH protein for their transcription. May act as a negative regulator of myogenesis by inhibiting the functions of MYOD1 and ASH1. Binds DNA on N-box motifs: 5'-CACNAG-3' with high affinity and on E-box motifs: 5'-CANNTG-3' with low affinity. May play a role in a functional FA core complex response to DNA cross-link damage, being required for the stability and nuclear localization of FA core complex proteins, as well as for FANCD2 monoubiquitination in response to DNA damage. This chain is Transcription factor HES-1 (Hes1), found in Mus musculus (Mouse).